The following is a 195-amino-acid chain: Putative lysine exporter (195 aa).

6 helical membrane-spanning segments follow: residues Leu-4 to Phe-24, Leu-30 to Ser-50, Leu-61 to Phe-81, Ile-86 to Leu-106, Ile-117 to Met-137, and Pro-170 to Phe-190.

Belongs to the LysO family.

The protein resides in the cell inner membrane. In terms of biological role, mediates export of lysine. The chain is Putative lysine exporter from Haemophilus influenzae (strain ATCC 51907 / DSM 11121 / KW20 / Rd).